Here is a 244-residue protein sequence, read N- to C-terminus: Cobalt transport protein CbiM (244 aa).

The N-terminal stretch at 1–28 is a signal peptide; sequence MKLLKNKKVTFVALLAILAVLSTQSVSA. Helical transmembrane passes span 36 to 56, 71 to 91, 108 to 128, 135 to 155, 166 to 186, and 208 to 228; these read LPLF…VVGL, TMLA…IPSV, FGPS…ALLL, TLGA…YFVY, PVSI…TTSI, and GVFL…TVVL.

Belongs to the CbiM family. In terms of assembly, forms an energy-coupling factor (ECF) transporter complex composed of an ATP-binding protein (A component, CbiO), a transmembrane protein (T component, CbiQ) and 2 possible substrate-capture proteins (S components, CbiM and CbiN) of unknown stoichimetry.

It localises to the cell membrane. It functions in the pathway cofactor biosynthesis; adenosylcobalamin biosynthesis. Part of the energy-coupling factor (ECF) transporter complex CbiMNOQ involved in cobalt import. The protein is Cobalt transport protein CbiM of Streptococcus sanguinis (strain SK36).